The chain runs to 428 residues: Histidinol dehydrogenase (428 aa).

Positions 127, 185, and 208 each coordinate NAD(+). Substrate is bound by residues Ser-232, Gln-254, and His-257. Residues Gln-254 and His-257 each contribute to the Zn(2+) site. Catalysis depends on proton acceptor residues Glu-321 and His-322. The substrate site is built by His-322, Asp-355, Glu-409, and His-414. A Zn(2+)-binding site is contributed by Asp-355. His-414 lines the Zn(2+) pocket.

Belongs to the histidinol dehydrogenase family. Requires Zn(2+) as cofactor.

The catalysed reaction is L-histidinol + 2 NAD(+) + H2O = L-histidine + 2 NADH + 3 H(+). Its pathway is amino-acid biosynthesis; L-histidine biosynthesis; L-histidine from 5-phospho-alpha-D-ribose 1-diphosphate: step 9/9. Functionally, catalyzes the sequential NAD-dependent oxidations of L-histidinol to L-histidinaldehyde and then to L-histidine. This is Histidinol dehydrogenase from Pasteurella multocida (strain Pm70).